The primary structure comprises 547 residues: Putative cysteine ligase BshC (547 aa).

Residues asparagine 462–histidine 484 adopt a coiled-coil conformation.

Belongs to the BshC family.

Functionally, involved in bacillithiol (BSH) biosynthesis. May catalyze the last step of the pathway, the addition of cysteine to glucosamine malate (GlcN-Mal) to generate BSH. The protein is Putative cysteine ligase BshC of Heliobacterium modesticaldum (strain ATCC 51547 / Ice1).